A 455-amino-acid polypeptide reads, in one-letter code: tRNA modification GTPase MnmE (455 aa).

3 residues coordinate (6S)-5-formyl-5,6,7,8-tetrahydrofolate: arginine 25, glutamate 85, and arginine 124. The TrmE-type G domain maps to 221 to 375; the sequence is GLSTAIIGRP…IEERINKLFF (155 aa). Asparagine 231 is a binding site for K(+). Residues 231 to 236, 250 to 256, and 275 to 278 each bind GTP; these read NVGKSS, TDIEGTT, and DTAG. A Mg(2+)-binding site is contributed by serine 235. The K(+) site is built by threonine 250, isoleucine 252, and threonine 255. Threonine 256 contributes to the Mg(2+) binding site. Residue lysine 455 coordinates (6S)-5-formyl-5,6,7,8-tetrahydrofolate.

Belongs to the TRAFAC class TrmE-Era-EngA-EngB-Septin-like GTPase superfamily. TrmE GTPase family. In terms of assembly, homodimer. Heterotetramer of two MnmE and two MnmG subunits. K(+) serves as cofactor.

Its subcellular location is the cytoplasm. Its function is as follows. Exhibits a very high intrinsic GTPase hydrolysis rate. Involved in the addition of a carboxymethylaminomethyl (cmnm) group at the wobble position (U34) of certain tRNAs, forming tRNA-cmnm(5)s(2)U34. This is tRNA modification GTPase MnmE from Streptococcus mutans serotype c (strain ATCC 700610 / UA159).